Consider the following 207-residue polypeptide: Large ribosomal subunit protein uL4 (207 aa).

Positions 48–78 (THKVKTRSEVRGGGRKPWRQKGTGRARQGSI) are disordered. Over residues 60-71 (GGRKPWRQKGTG) the composition is skewed to basic residues.

It belongs to the universal ribosomal protein uL4 family. Part of the 50S ribosomal subunit.

In terms of biological role, one of the primary rRNA binding proteins, this protein initially binds near the 5'-end of the 23S rRNA. It is important during the early stages of 50S assembly. It makes multiple contacts with different domains of the 23S rRNA in the assembled 50S subunit and ribosome. Its function is as follows. Forms part of the polypeptide exit tunnel. In Bacillus pumilus (strain SAFR-032), this protein is Large ribosomal subunit protein uL4.